The following is a 111-amino-acid chain: Carboxysome shell protein CcmK1 (111 aa).

The 87-residue stretch at 4 to 90 folds into the BMC domain; sequence AVGMIETLGF…PHENLEYVLP (87 aa).

This sequence belongs to the bacterial microcompartments protein family. CcmK subfamily. Homohexamer. Interacts with full-length CcmM. Forms mixed heterohexamers of all possible stoichiometries with CcmK2, which might form dodecamers. Only very weak interactions with CcmK3 and CcmK4 were seen. Interacts with CcmN and CcmO in the carboxysome.

It localises to the carboxysome. Functionally, one of the shell proteins of the carboxysome, a polyhedral inclusion where RuBisCO (ribulose bisphosphate carboxylase, rbcL-rbcS) is sequestered. Assembles into hexamers which make sheets that form the facets of the polyhedral carboxysome. The hexamer central pore probably regulates metabolite flux. Its function is as follows. Probably the major shell protein of the carboxysome, a polyhedral inclusion where RuBisCO (ribulose bisphosphate carboxylase, rbcL-rbcS) is sequestered. The central pore probably regulates metabolite flux. Hexamers make sheets that form the facets of the carboxysome. This Synechocystis sp. (strain ATCC 27184 / PCC 6803 / Kazusa) protein is Carboxysome shell protein CcmK1.